The primary structure comprises 493 residues: MVLHVYNTLTKSKEEFIPLEPGKVKFYVCGVTVYDLSHIGHARSAIVFDVIYRYLRFLGFEVTYVRNFTDVDDKIIRRANDAGTDCRSIAQRYIAAFYEDMDALGVLRPDLEPLATENVPGMIEIIRVLMDKGIAYQAGADVFFEIEKFPGYGKLSGRQIEDMLAGARVEVDARKRNPLDFVLWKGSKPGEPSWDSPWGPGRPGWHIECSAMGSRFLGKTFDIHGGGKDLIFPHHENEIAQSEAAFGMPFVRYWLHNGFVNINNEKMSKSLGNFLTIRDVLQKVHPETVRFFVLSKHYRSPVDFSDETIGEAEKGLERLYGTLGAVKERAAAGVEEAFQEKALRGQDPELFDQIAALSGAFREAMDNDFNTAQALGNLFSLQRHLQRFLDKFGRKQLKGPASALARAGADAIRDHALVLGLLTREPEAFQAEQRSLKIKSTGLTEAEVERCIELRRQARQDKNFAEADRLREEIEKKGIQLEDSPAGTRWRVG.

Zn(2+) is bound at residue Cys-29. Positions 31-41 match the 'HIGH' region motif; that stretch reads VTVYDLSHIGH. Residues Cys-209, His-234, and Glu-238 each coordinate Zn(2+). A 'KMSKS' region motif is present at residues 266 to 270; the sequence is KMSKS. Residue Lys-269 coordinates ATP.

The protein belongs to the class-I aminoacyl-tRNA synthetase family. As to quaternary structure, monomer. Requires Zn(2+) as cofactor.

It is found in the cytoplasm. It catalyses the reaction tRNA(Cys) + L-cysteine + ATP = L-cysteinyl-tRNA(Cys) + AMP + diphosphate. This is Cysteine--tRNA ligase from Syntrophobacter fumaroxidans (strain DSM 10017 / MPOB).